Here is a 466-residue protein sequence, read N- to C-terminus: MSQGTIVQCIGAVVDIQFPREAMPKVYDALKLENAAGSFAEEGLTFEVQQQLGDGVVRTIAMGSSDGLRRGMKVASTGKGISIPVGHGTLGRIMDVLGRPIDEAGPIEADELRPIHAKAPKFDELSPSVDLLETGIKVIDLVCPFAKGGKVGLFGGAGVGKTVNMMELINNIAKQHSGLSVFAGVGERTREGNDFYHEMKDSNVLDKVAMVFGQMNEPPGNRLRVALTGLTMAERFRDEGRDILFFVDNIYRYTLAGTEVSALLGRMPSAVGYQPTLAEEMGRLQERITSTKVGSITSIQAVYVPADDLTDPSPATTFLHLDSTVVLSRDIAALGIYPAVDPLDSTSRQLDPLVVGEEHYNVARQVQVTLQRYKELRDIIAILGMDELSPEDKLAVSRARKIQRFLSQPFHVAEVFTGSPGKYVPLKDTINGFKMIVNGECDHLPEQAFYMVGGIEEAMEKAKKLQ.

155–162 contributes to the ATP binding site; sequence GGAGVGKT.

Belongs to the ATPase alpha/beta chains family. As to quaternary structure, F-type ATPases have 2 components, CF(1) - the catalytic core - and CF(0) - the membrane proton channel. CF(1) has five subunits: alpha(3), beta(3), gamma(1), delta(1), epsilon(1). CF(0) has three main subunits: a(1), b(2) and c(9-12). The alpha and beta chains form an alternating ring which encloses part of the gamma chain. CF(1) is attached to CF(0) by a central stalk formed by the gamma and epsilon chains, while a peripheral stalk is formed by the delta and b chains.

The protein localises to the cell inner membrane. It catalyses the reaction ATP + H2O + 4 H(+)(in) = ADP + phosphate + 5 H(+)(out). Functionally, produces ATP from ADP in the presence of a proton gradient across the membrane. The catalytic sites are hosted primarily by the beta subunits. The polypeptide is ATP synthase subunit beta (Aromatoleum aromaticum (strain DSM 19018 / LMG 30748 / EbN1) (Azoarcus sp. (strain EbN1))).